The chain runs to 322 residues: Lipoyl synthase (322 aa).

The segment covering 1-12 (MVTVLNTVNQSG) has biased composition (polar residues). The segment at 1–22 (MVTVLNTVNQSGRLRHPEKAHR) is disordered. [4Fe-4S] cluster contacts are provided by cysteine 60, cysteine 65, cysteine 71, cysteine 86, cysteine 90, cysteine 93, and serine 299. The 217-residue stretch at 72 to 288 (WEKKHATFMI…ETIGKTKGFL (217 aa)) folds into the Radical SAM core domain.

Belongs to the radical SAM superfamily. Lipoyl synthase family. The cofactor is [4Fe-4S] cluster.

It localises to the cytoplasm. It catalyses the reaction [[Fe-S] cluster scaffold protein carrying a second [4Fe-4S](2+) cluster] + N(6)-octanoyl-L-lysyl-[protein] + 2 oxidized [2Fe-2S]-[ferredoxin] + 2 S-adenosyl-L-methionine + 4 H(+) = [[Fe-S] cluster scaffold protein] + N(6)-[(R)-dihydrolipoyl]-L-lysyl-[protein] + 4 Fe(3+) + 2 hydrogen sulfide + 2 5'-deoxyadenosine + 2 L-methionine + 2 reduced [2Fe-2S]-[ferredoxin]. It participates in protein modification; protein lipoylation via endogenous pathway; protein N(6)-(lipoyl)lysine from octanoyl-[acyl-carrier-protein]: step 2/2. Its function is as follows. Catalyzes the radical-mediated insertion of two sulfur atoms into the C-6 and C-8 positions of the octanoyl moiety bound to the lipoyl domains of lipoate-dependent enzymes, thereby converting the octanoylated domains into lipoylated derivatives. This Brucella abortus (strain S19) protein is Lipoyl synthase.